Reading from the N-terminus, the 194-residue chain is Peptidyl-tRNA hydrolase (194 aa).

A tRNA-binding site is contributed by Tyr17. The active-site Proton acceptor is the His22. TRNA contacts are provided by Phe68, Asn70, and Asn116.

It belongs to the PTH family. In terms of assembly, monomer.

The protein resides in the cytoplasm. The catalysed reaction is an N-acyl-L-alpha-aminoacyl-tRNA + H2O = an N-acyl-L-amino acid + a tRNA + H(+). Functionally, hydrolyzes ribosome-free peptidyl-tRNAs (with 1 or more amino acids incorporated), which drop off the ribosome during protein synthesis, or as a result of ribosome stalling. In terms of biological role, catalyzes the release of premature peptidyl moieties from peptidyl-tRNA molecules trapped in stalled 50S ribosomal subunits, and thus maintains levels of free tRNAs and 50S ribosomes. The chain is Peptidyl-tRNA hydrolase from Histophilus somni (strain 2336) (Haemophilus somnus).